A 341-amino-acid polypeptide reads, in one-letter code: L-threonine 3-dehydrogenase (341 aa).

Cys-38 is a binding site for Zn(2+). Active-site charge relay system residues include Thr-40 and His-43. Residues His-63, Glu-64, Cys-93, Cys-96, Cys-99, and Cys-107 each coordinate Zn(2+). NAD(+) is bound by residues Ile-175, Asp-195, Arg-200, 262–264 (LGI), and 286–287 (IY).

The protein belongs to the zinc-containing alcohol dehydrogenase family. In terms of assembly, homotetramer. Zn(2+) serves as cofactor.

It is found in the cytoplasm. It carries out the reaction L-threonine + NAD(+) = (2S)-2-amino-3-oxobutanoate + NADH + H(+). It participates in amino-acid degradation; L-threonine degradation via oxydo-reductase pathway; glycine from L-threonine: step 1/2. Functionally, catalyzes the NAD(+)-dependent oxidation of L-threonine to 2-amino-3-ketobutyrate. The chain is L-threonine 3-dehydrogenase from Salmonella typhi.